We begin with the raw amino-acid sequence, 424 residues long: MTSNSKGVEILSIGTELLLGNIVNTNAKWISEQLSQLGLNHFRQSTVGDNCDRIIKVIQEISQRSNLLITTGGLGPTPDDLTTEAIAKSFNVSLFEKEYLWDEIKQKLSNSKLQDNYSSLRKQCFFPKNAQIINNPRGTAPGMIWEPIKGFTILTFPGVPSEMKTMWEETALDFIKNKFSDSYSFFSNTLKFSGIGESTVAEKINDLLNLKNPTVAPYANLGEVKLRITARAKSEVEANNLINPVKEKLKKEFSNFIFGENHDTLPGVLIKELAKRNETIVFAESCTGGLLSSSITSISGSSQVFLGSIVTYSNDLKNSLLNISEEKLKKYGAVSEKVCQAMATNVKEKLEADWAIAISGIAGPNGGCKEKPVGLVHISISGPNNHITNIKKTFNSTRNRIEIQTLSVNVCLNSLRLILLSKRK.

This sequence belongs to the CinA family.

The sequence is that of CinA-like protein from Prochlorococcus marinus (strain MIT 9312).